Consider the following 163-residue polypeptide: Nucleotide-binding protein Pnap_1080 (163 aa).

Belongs to the YajQ family.

Functionally, nucleotide-binding protein. This is Nucleotide-binding protein Pnap_1080 from Polaromonas naphthalenivorans (strain CJ2).